Here is a 511-residue protein sequence, read N- to C-terminus: Histidine ammonia-lyase (511 aa).

The segment at residues 142 to 144 (ASG) is a cross-link (5-imidazolinone (Ala-Gly)). 2,3-didehydroalanine (Ser) is present on Ser-143.

It belongs to the PAL/histidase family. Post-translationally, contains an active site 4-methylidene-imidazol-5-one (MIO), which is formed autocatalytically by cyclization and dehydration of residues Ala-Ser-Gly.

The protein resides in the cytoplasm. The enzyme catalyses L-histidine = trans-urocanate + NH4(+). Its pathway is amino-acid degradation; L-histidine degradation into L-glutamate; N-formimidoyl-L-glutamate from L-histidine: step 1/3. The polypeptide is Histidine ammonia-lyase (Brucella abortus (strain S19)).